Here is a 131-residue protein sequence, read N- to C-terminus: Profilin-3 (131 aa).

Residues Cys-13 and Cys-115 are joined by a disulfide bond. Positions 81–97 (AVIRGKKGAGGITIKKT) match the Involved in PIP2 interaction motif. The residue at position 111 (Thr-111) is a Phosphothreonine.

This sequence belongs to the profilin family. Occurs in many kinds of cells as a complex with monomeric actin in a 1:1 ratio. Phosphorylated by MAP kinases.

It is found in the cytoplasm. Its subcellular location is the cytoskeleton. Binds to actin and affects the structure of the cytoskeleton. At high concentrations, profilin prevents the polymerization of actin, whereas it enhances it at low concentrations. By binding to PIP2, it inhibits the formation of IP3 and DG. This Phleum pratense (Common timothy) protein is Profilin-3 (PRO3).